The following is a 570-amino-acid chain: MVAQQQGKFTVGDYLAERLAQVGVRHHFVVPGDYNLILLDKLQAHPDLKEVGCANELNCSLAAEGYARANGISACVVTYSVGALSAFNGTGSAYAENLPLVLISGSPNTNDPSQYHILHHTLGHPDYTYQYEMAKKITCCAVAIPRAIDAPRLIDRALRAAILARKPCYIEIPTNLAGATCVRPGPISAITDPITSDKSALEAAAKCAAEYLDGKLKPVILVGPKAGRAGSEKELIEFAEAMGCAVALQPAAKGMFPEDHKQFVGIFWGQVSSDAADAMVHWADAMICVGAVFNDYSTVGWTAVPNIPLMTVDMDHVTFPGAHFSRVRMCEFLSHLATQVTFNDSTMIEYKRLKPDPPHVHTAEREEPLSRKEISRQVQEMLTDKTSLFVDTGDSWFNGIQLKLPPGAKFEIEMQWGHIGWSIPAAFGYALRHPDRHTIVLVGDGSFQVTAQEVSQMVRFKVPITIMLINNRGYTIEVEIHDGSYNKIKNWDYAMLVEAFNSTDGHAKGLLANTAGELADAIKVAESHKEGPTLIECTIDQDDCSKELITWGHYVAAANARPPRNMSVQE.

Positions M1–V2 are cleaved as a propeptide — removed in mature form. Substrate-binding residues include D33 and H120. The interval D394–I476 is thiamine pyrophosphate binding. Mg(2+) contacts are provided by D444, N471, and G473. E477 lines the substrate pocket.

The protein belongs to the TPP enzyme family. Homomer. Requires a metal cation as cofactor. Thiamine diphosphate serves as cofactor.

The protein resides in the cytoplasm. The catalysed reaction is a 2-oxocarboxylate + H(+) = an aldehyde + CO2. Its pathway is carbohydrate metabolism; pyruvate metabolism. This is Pyruvate decarboxylase (cfp) from Neurospora crassa (strain ATCC 24698 / 74-OR23-1A / CBS 708.71 / DSM 1257 / FGSC 987).